The chain runs to 400 residues: Acetylornithine aminotransferase (400 aa).

Residues 106–107 (GA) and F132 each bind pyridoxal 5'-phosphate. N(2)-acetyl-L-ornithine is bound at residue R135. Pyridoxal 5'-phosphate is bound at residue 217-220 (DEVQ). K246 bears the N6-(pyridoxal phosphate)lysine mark. S274 is a binding site for N(2)-acetyl-L-ornithine. T275 lines the pyridoxal 5'-phosphate pocket.

Belongs to the class-III pyridoxal-phosphate-dependent aminotransferase family. ArgD subfamily. Homodimer. Requires pyridoxal 5'-phosphate as cofactor.

It is found in the cytoplasm. It carries out the reaction N(2)-acetyl-L-ornithine + 2-oxoglutarate = N-acetyl-L-glutamate 5-semialdehyde + L-glutamate. The protein operates within amino-acid biosynthesis; L-arginine biosynthesis; N(2)-acetyl-L-ornithine from L-glutamate: step 4/4. The protein is Acetylornithine aminotransferase of Streptomyces clavuligerus.